A 159-amino-acid polypeptide reads, in one-letter code: Nucleotide-binding protein Avin_13410 (159 aa).

Belongs to the YajQ family.

Its function is as follows. Nucleotide-binding protein. This Azotobacter vinelandii (strain DJ / ATCC BAA-1303) protein is Nucleotide-binding protein Avin_13410.